Reading from the N-terminus, the 1439-residue chain is Probable histone acetyltransferase HAC-like 2 (1439 aa).

Disordered stretches follow at residues 1 to 43 (MKQG…ASAD) and 313 to 335 (YGISPNKPLQRHVNPSTRSTPTP). Residues 325–335 (VNPSTRSTPTP) show a composition bias toward polar residues. The TAZ-type zinc-finger motif lies at 607 to 687 (ENTKQYHAQA…NEHCHVCCKA (81 aa)). A PHD-type; degenerate zinc finger spans residues 827-933 (KIHCHVQQET…EYTCFKCYIE (107 aa)). Positions 948-1383 (VRGAKDLPRT…MLYHLHNPTG (436 aa)) constitute a CBP/p300-type HAT domain. A coiled-coil region spans residues 964–989 (EERLFKRLREERQERANKLKTSLDEV). Acetyl-CoA contacts are provided by residues 1071-1073 (LDS), 1090-1091 (RT), and Trp-1146. The ZZ-type zinc finger occupies 1265–1328 (HLQYSCSHCC…ILHPVEIVGV (64 aa)). Residues Cys-1270, Cys-1273, Cys-1285, Cys-1288, Cys-1294, Cys-1297, His-1310, and His-1318 each contribute to the Zn(2+) site.

It is found in the nucleus. The enzyme catalyses L-lysyl-[protein] + acetyl-CoA = N(6)-acetyl-L-lysyl-[protein] + CoA + H(+). In terms of biological role, acetyltransferase enzyme. Acetylates histones, giving a specific tag for transcriptional activation. In Oryza sativa subsp. japonica (Rice), this protein is Probable histone acetyltransferase HAC-like 2.